The primary structure comprises 334 residues: Anthranilate phosphoribosyltransferase (334 aa).

5-phospho-alpha-D-ribose 1-diphosphate contacts are provided by residues Gly-79, 82-83 (GD), Ser-87, 89-92 (NIST), 107-115 (KAGNRSISS), and Ser-119. Gly-79 contributes to the anthranilate binding site. Ser-91 is a binding site for Mg(2+). Asn-110 contributes to the anthranilate binding site. Arg-165 contacts anthranilate. Mg(2+)-binding residues include Asp-224 and Glu-225.

The protein belongs to the anthranilate phosphoribosyltransferase family. Homodimer. Mg(2+) serves as cofactor.

The enzyme catalyses N-(5-phospho-beta-D-ribosyl)anthranilate + diphosphate = 5-phospho-alpha-D-ribose 1-diphosphate + anthranilate. The protein operates within amino-acid biosynthesis; L-tryptophan biosynthesis; L-tryptophan from chorismate: step 2/5. Catalyzes the transfer of the phosphoribosyl group of 5-phosphorylribose-1-pyrophosphate (PRPP) to anthranilate to yield N-(5'-phosphoribosyl)-anthranilate (PRA). This Streptococcus thermophilus (strain ATCC BAA-491 / LMD-9) protein is Anthranilate phosphoribosyltransferase.